The chain runs to 475 residues: Ribulose bisphosphate carboxylase large chain (475 aa).

A propeptide spanning residues 1 to 2 (MS) is cleaved from the precursor. The residue at position 3 (Pro-3) is an N-acetylproline. Residue Lys-14 is modified to N6,N6,N6-trimethyllysine. Substrate-binding residues include Asn-123 and Thr-173. The active-site Proton acceptor is Lys-175. Lys-177 is a substrate binding site. Positions 201, 203, and 204 each coordinate Mg(2+). Lys-201 is modified (N6-carboxylysine). His-294 acts as the Proton acceptor in catalysis. Substrate contacts are provided by Arg-295, His-327, and Ser-379.

The protein belongs to the RuBisCO large chain family. Type I subfamily. As to quaternary structure, heterohexadecamer of 8 large chains and 8 small chains; disulfide-linked. The disulfide link is formed within the large subunit homodimers. Mg(2+) is required as a cofactor. In terms of processing, the disulfide bond which can form in the large chain dimeric partners within the hexadecamer appears to be associated with oxidative stress and protein turnover.

It localises to the plastid. It is found in the chloroplast. It catalyses the reaction 2 (2R)-3-phosphoglycerate + 2 H(+) = D-ribulose 1,5-bisphosphate + CO2 + H2O. The enzyme catalyses D-ribulose 1,5-bisphosphate + O2 = 2-phosphoglycolate + (2R)-3-phosphoglycerate + 2 H(+). Functionally, ruBisCO catalyzes two reactions: the carboxylation of D-ribulose 1,5-bisphosphate, the primary event in carbon dioxide fixation, as well as the oxidative fragmentation of the pentose substrate in the photorespiration process. Both reactions occur simultaneously and in competition at the same active site. The sequence is that of Ribulose bisphosphate carboxylase large chain from Populus tremuloides (Quaking aspen).